Here is a 56-residue protein sequence, read N- to C-terminus: UPF0391 membrane protein Noc_0482 (56 aa).

The next 2 helical transmembrane spans lie at 1 to 21 (MFGW…FGFT) and 29 to 49 (HIAW…LLLG).

This sequence belongs to the UPF0391 family.

The protein localises to the cell membrane. This Nitrosococcus oceani (strain ATCC 19707 / BCRC 17464 / JCM 30415 / NCIMB 11848 / C-107) protein is UPF0391 membrane protein Noc_0482.